The sequence spans 84 residues: MSDKIRTQLGRVVSDKMDKSIVVAIERMVKHPIYGKFVKRTTKVHAHDENNECGIGDTVEIRECRPLSKTKSWTLVKVVEKAKI.

This sequence belongs to the universal ribosomal protein uS17 family. As to quaternary structure, part of the 30S ribosomal subunit.

In terms of biological role, one of the primary rRNA binding proteins, it binds specifically to the 5'-end of 16S ribosomal RNA. The polypeptide is Small ribosomal subunit protein uS17 (Vibrio vulnificus (strain CMCP6)).